Consider the following 79-residue polypeptide: Panulirin (79 aa).

An N-terminal signal peptide occupies residues 1 to 22 (MKNKAVLMLMALFLVAVTQVHG). The propeptide occupies 23-26 (DPEP). 3 disulfide bridges follow: C33-C63, C40-C56, and C46-C64. A propeptide spanning residues 75-79 (QLLAA) is cleaved from the precursor.

In terms of assembly, monomer. In terms of processing, contains 3 disulfide bonds. In terms of tissue distribution, expressed in hemocytes (at protein level).

Functionally, involved in the melanization cascade in response to lipopolysaccharide (LPS). In vitro, reversibly and competitively inhibits trypsin (Ki=8.6 nM) but not serine proteases chymotrypsin, elastase, subtilisin, thrombin and plasmin, cysteine peptidase papain or metallopeptidase carboxypeptidase A. The protein is Panulirin of Panulirus argus (Caribbean spiny lobster).